A 371-amino-acid polypeptide reads, in one-letter code: GPI mannosyltransferase 1 (371 aa).

8 consecutive transmembrane segments (helical) span residues 64 to 84 (FPSW…WLMI), 120 to 140 (AILG…SVWL), 144 to 164 (ILGF…AFLV), 190 to 210 (IVVG…YLYG), 248 to 268 (ASSL…PLVF), 290 to 310 (VCTS…LPNS), 318 to 338 (LICL…AYNL), and 344 to 364 (SVFI…VYEL).

Belongs to the PIGM family.

The protein localises to the endoplasmic reticulum membrane. It functions in the pathway glycolipid biosynthesis; glycosylphosphatidylinositol-anchor biosynthesis. Mannosyltransferase involved in glycosylphosphatidylinositol-anchor biosynthesis. Transfers the first alpha-1,4-mannose to GlcN-acyl-PI during GPI precursor assembly. Required for cell wall integrity. This is GPI mannosyltransferase 1 (gpi14) from Schizosaccharomyces pombe (strain 972 / ATCC 24843) (Fission yeast).